The chain runs to 773 residues: Acyl-homoserine lactone acylase PvdQ (773 aa).

The signal sequence occupies residues 1–23 (MSRALPGFLFAGLSVAVVLPAQA). The propeptide at 200–221 (SQQVQALQLAAARNERFALERG) is spacer peptide. Serine 222 acts as the Nucleophile in catalysis.

The protein belongs to the peptidase S45 family. As to quaternary structure, heterodimer of an alpha subunit and a beta subunit processed from the same precursor.

The protein localises to the periplasm. It carries out the reaction an N-acyl-L-homoserine lactone + H2O = L-homoserine lactone + a carboxylate. In terms of biological role, catalyzes the deacylation of acyl-homoserine lactone (AHL or acyl-HSL), releasing homoserine lactone (HSL) and the corresponding fatty acid. Possesses a specificity for the degradation of long-chain acyl-HSLs (side chains of 11 to 14 carbons in length). The polypeptide is Acyl-homoserine lactone acylase PvdQ (pvdQ) (Pseudomonas syringae pv. tomato (strain ATCC BAA-871 / DC3000)).